Reading from the N-terminus, the 94-residue chain is Integration host factor subunit beta (94 aa).

This sequence belongs to the bacterial histone-like protein family. In terms of assembly, heterodimer of an alpha and a beta chain.

This protein is one of the two subunits of integration host factor, a specific DNA-binding protein that functions in genetic recombination as well as in transcriptional and translational control. This Serratia marcescens protein is Integration host factor subunit beta (ihfB).